A 428-amino-acid chain; its full sequence is GTPase Obg (428 aa).

Residues 1-158 form the Obg domain; the sequence is MFVDQVKVYV…RDVILELKVL (158 aa). Positions 118-145 are disordered; it reads KGGRGGRGNSRFATPANPAPQLSENGEP. In terms of domain architecture, OBG-type G spans 159–329; that stretch reads ADVGLVGFPS…LLFEIANQLE (171 aa). GTP is bound by residues 165–172, 190–194, 212–215, 282–285, and 310–312; these read GFPSVGKS, FTTLV, DLPG, NKMD, and SAI. Serine 172 and threonine 192 together coordinate Mg(2+). In terms of domain architecture, OCT spans 350–428; sequence RFDEGDAPFE…LLEFEFEFID (79 aa).

This sequence belongs to the TRAFAC class OBG-HflX-like GTPase superfamily. OBG GTPase family. In terms of assembly, monomer. Mg(2+) is required as a cofactor.

It is found in the cytoplasm. Functionally, an essential GTPase which binds GTP, GDP and possibly (p)ppGpp with moderate affinity, with high nucleotide exchange rates and a fairly low GTP hydrolysis rate. Plays a role in control of the cell cycle, stress response, ribosome biogenesis and in those bacteria that undergo differentiation, in morphogenesis control. This Bacillus pumilus (strain SAFR-032) protein is GTPase Obg.